The primary structure comprises 252 residues: Glucosamine-6-phosphate deaminase (252 aa).

Asp67 (proton acceptor; for enolization step) is an active-site residue. The active-site For ring-opening step is the Asn137. The active-site Proton acceptor; for ring-opening step is the His139. The active-site For ring-opening step is the Glu144.

It belongs to the glucosamine/galactosamine-6-phosphate isomerase family. NagB subfamily.

The catalysed reaction is alpha-D-glucosamine 6-phosphate + H2O = beta-D-fructose 6-phosphate + NH4(+). It functions in the pathway amino-sugar metabolism; N-acetylneuraminate degradation; D-fructose 6-phosphate from N-acetylneuraminate: step 5/5. Functionally, catalyzes the reversible isomerization-deamination of glucosamine 6-phosphate (GlcN6P) to form fructose 6-phosphate (Fru6P) and ammonium ion. The polypeptide is Glucosamine-6-phosphate deaminase (Staphylococcus aureus (strain MRSA252)).